Here is a 291-residue protein sequence, read N- to C-terminus: Segregation and condensation protein A (291 aa).

Belongs to the ScpA family. As to quaternary structure, component of a cohesin-like complex composed of ScpA, ScpB and the Smc homodimer, in which ScpA and ScpB bind to the head domain of Smc. The presence of the three proteins is required for the association of the complex with DNA.

It localises to the cytoplasm. In terms of biological role, participates in chromosomal partition during cell division. May act via the formation of a condensin-like complex containing Smc and ScpB that pull DNA away from mid-cell into both cell halves. This chain is Segregation and condensation protein A, found in Malacoplasma penetrans (strain HF-2) (Mycoplasma penetrans).